A 387-amino-acid polypeptide reads, in one-letter code: MAPPAGGAAAAASDLGSAAVLLAVHAAVRPLGAGPDAEAQLRRLQLSADPERPGRFRLELLGAGPGAVNLEWPLESVSYTIRGPTQHELQPPPGGPGTLSLHFLNPQEAQRWAVLVRGATVEGQNGSKSNSPPALGPEACPVSLPSPPEASTLKGPPPEADLPRSPGNLTEREELAGSLARAIAGGDEKGAAQVAAVLAQHRVALSVQLQEACFPPGPIRLQVTLEDAASAASAASSAHVALQVHPHCTVAALQEQVFSELGFPPAVQRWVIGRCLCVPERSLASYGVRQDGDPAFLYLLSAPREAPATGPSPQHPQKMDGELGRLFPPSLGLPPGPQPAASSLPSPLQPSWSCPSCTFINAPDRPGCEMCSTQRPCTWDPLAAAST.

The tract at residues 1-180 (MAPPAGGAAA…EREELAGSLA (180 aa)) is self-association. Residues 122–132 (EGQNGSKSNSP) are compositionally biased toward polar residues. The segment at 122–169 (EGQNGSKSNSPPALGPEACPVSLPSPPEASTLKGPPPEADLPRSPGNL) is disordered. Serine 165 bears the Phosphoserine mark. The interval 175-310 (LAGSLARAIA…SAPREAPATG (136 aa)) is interaction with SHANK1. The region spanning 219–288 (IRLQVTLEDA…PERSLASYGV (70 aa)) is the Ubiquitin-like domain. The interval 305–349 (EAPATGPSPQHPQKMDGELGRLFPPSLGLPPGPQPAASSLPSPLQ) is disordered. At serine 312 the chain carries Phosphoserine. Residues 339–349 (PAASSLPSPLQ) are compositionally biased toward low complexity. The RanBP2-type zinc finger occupies 348-377 (LQPSWSCPSCTFINAPDRPGCEMCSTQRPC).

In terms of assembly, monomer and homodimer. Component of the LUBAC complex (linear ubiquitin chain assembly complex) which consists of SHARPIN, RBCK1 and RNF31. LUBAC has a MW of approximately 600 kDa suggesting a heteromultimeric assembly of its subunits. Associates with the TNF-R1 signaling complex (TNF-RSC) in a stimulation-dependent manner. Interacts with EYA1, EYA2, SHANK1 and SHANK3 (via ANK repeats). As to expression, highly expressed in skeletal muscle and placenta and at lower levels in brain, heart, colon without mucosa, thymus, spleen, kidney, liver, small intestine, lung and peripheral blood leukocytes. Up-regulated in various tumor tissues such as kidney, liver, ovary and pancreas tumors.

It is found in the cytoplasm. The protein localises to the cytosol. It localises to the synapse. Its pathway is protein modification; protein ubiquitination. Functionally, component of the LUBAC complex which conjugates linear polyubiquitin chains in a head-to-tail manner to substrates and plays a key role in NF-kappa-B activation and regulation of inflammation. LUBAC conjugates linear polyubiquitin to IKBKG and RIPK1 and is involved in activation of the canonical NF-kappa-B and the JNK signaling pathways. Linear ubiquitination mediated by the LUBAC complex interferes with TNF-induced cell death and thereby prevents inflammation. LUBAC is recruited to the TNF-R1 signaling complex (TNF-RSC) following polyubiquitination of TNF-RSC components by BIRC2 and/or BIRC3 and to conjugate linear polyubiquitin to IKBKG and possibly other components contributing to the stability of the complex. The LUBAC complex is also involved in innate immunity by conjugating linear polyubiquitin chains at the surface of bacteria invading the cytosol to form the ubiquitin coat surrounding bacteria. LUBAC is not able to initiate formation of the bacterial ubiquitin coat, and can only promote formation of linear polyubiquitins on pre-existing ubiquitin. The bacterial ubiquitin coat acts as an 'eat-me' signal for xenophagy and promotes NF-kappa-B activation. Together with OTULIN, the LUBAC complex regulates the canonical Wnt signaling during angiogenesis. This Homo sapiens (Human) protein is Sharpin.